We begin with the raw amino-acid sequence, 324 residues long: Transcriptional regulator protein Pur-beta (324 aa).

The interval 1-47 is disordered; that stretch reads MADGDSGSERGGGGGGGGGPGGFQPAPRGGGGGGGGPGGEQETQELA. Alanine 2 bears the N-acetylalanine mark. Serine 6 and serine 8 each carry phosphoserine. The segment covering 9–39 has biased composition (gly residues); sequence ERGGGGGGGGGPGGFQPAPRGGGGGGGGPGG. Omega-N-methylarginine is present on arginine 28. The interval 37–263 is DNA-binding; it reads PGGEQETQEL…GVFLRVSEVK (227 aa). Threonine 43 carries the phosphothreonine modification. Serine 113 carries the phosphoserine modification. Arginine 164 carries the omega-N-methylarginine modification. Lysine 279 is modified (N6-acetyllysine). Basic and acidic residues predominate over residues 297 to 307; the sequence is RQRDKLYERRG. The segment at 297-324 is disordered; sequence RQRDKLYERRGGGSGGGDESEGEEVDED. Omega-N-methylarginine is present on arginine 306. Serine 310 and serine 316 each carry phosphoserine. A compositionally biased stretch (acidic residues) spans 314–324; the sequence is DESEGEEVDED.

It belongs to the PUR DNA-binding protein family. Homodimer, heterodimer with PURA and heterotrimer with PURA and YBX1/Y-box protein 1. Interacts with MYOCD and SRF.

Its subcellular location is the nucleus. Its function is as follows. Transcriptional regulator which can act as an activator or a repressor. Represses the transcription of ACTA2 in fibroblasts and smooth muscle cells via its ability to interact with the purine-rich strand of a MCAT-containing element in the 5' flanking region of the gene. Represses the transcription of MYOCD, capable of repressing all isoforms of MYOCD but the magnitude of the repressive effects is most notable for the SMC-specific isoforms. Promotes hepatic glucose production by activating the transcription of ADCY6, leading to cAMP accumulation, increased PKA activity, CREB activation, and increased transcription of PCK1 and G6PC genes. Has capacity to bind repeated elements in single-stranded DNA such as the purine-rich single strand of the PUR element located upstream of the MYC gene. Participates in transcriptional and translational regulation of alpha-MHC expression in cardiac myocytes by binding to the purine-rich negative regulatory (PNR) element. Modulates constitutive liver galectin-3 gene transcription by binding to its promoter. May play a role in the dendritic transport of a subset of mRNAs. In Mus musculus (Mouse), this protein is Transcriptional regulator protein Pur-beta (Purb).